A 690-amino-acid polypeptide reads, in one-letter code: uncharacterized protein (690 aa).

This is an uncharacterized protein from Acanthamoeba polyphaga (Amoeba).